A 356-amino-acid chain; its full sequence is MKLNVNLPDHPYDVIIENGALANIGNWVSSLWKKQKIVLISDNHVNGLYGQKVVEQLEKSGFEVETFEFPEGEASKNLLTAEKAWNFCAEFGLTRSDGIIAFGGGVTGDLAGFVASTYMRGIHFLQIPTSLTAQVDSSIGGKTGINSKMAKNMIGTFTQPDGVLIDPEVLKTLGQREFCEGLGEVIKCALIADKALWNLLTDLSAKDLLENFAKIEEIIYRSCEVKRKVVVDDVLDNGVRLYLNFGHTIGHAVENTAGYGKVMHGEAVAIGMVQISKIAEKKGLMPLGITDEIRKMVKKYGLPDDYQPWDEALLFKALTHDKKARGTIIKTVIVPEIGTAKINEVTFEEMKEYLKK.

NAD(+) is bound by residues 71–76 (EGEASK), 105–109 (GVTGD), 129–130 (TS), K142, and K151. Positions 184, 247, and 264 each coordinate Zn(2+).

Belongs to the sugar phosphate cyclases superfamily. Dehydroquinate synthase family. The cofactor is Co(2+). It depends on Zn(2+) as a cofactor. NAD(+) is required as a cofactor.

It localises to the cytoplasm. It catalyses the reaction 7-phospho-2-dehydro-3-deoxy-D-arabino-heptonate = 3-dehydroquinate + phosphate. Its pathway is metabolic intermediate biosynthesis; chorismate biosynthesis; chorismate from D-erythrose 4-phosphate and phosphoenolpyruvate: step 2/7. Functionally, catalyzes the conversion of 3-deoxy-D-arabino-heptulosonate 7-phosphate (DAHP) to dehydroquinate (DHQ). The protein is 3-dehydroquinate synthase of Lactococcus lactis subsp. cremoris (strain SK11).